The chain runs to 346 residues: Anthranilate phosphoribosyltransferase (346 aa).

5-phospho-alpha-D-ribose 1-diphosphate is bound by residues Gly-88, Gly-91–Asp-92, Thr-96, Asn-98–Thr-101, Lys-116–Ser-124, and Ala-128. Position 88 (Gly-88) interacts with anthranilate. Ser-100 serves as a coordination point for Mg(2+). An anthranilate-binding site is contributed by Asn-119. Arg-174 lines the anthranilate pocket. 2 residues coordinate Mg(2+): Asp-233 and Glu-234.

It belongs to the anthranilate phosphoribosyltransferase family. Homodimer. Mg(2+) is required as a cofactor.

The enzyme catalyses N-(5-phospho-beta-D-ribosyl)anthranilate + diphosphate = 5-phospho-alpha-D-ribose 1-diphosphate + anthranilate. Its pathway is amino-acid biosynthesis; L-tryptophan biosynthesis; L-tryptophan from chorismate: step 2/5. In terms of biological role, catalyzes the transfer of the phosphoribosyl group of 5-phosphorylribose-1-pyrophosphate (PRPP) to anthranilate to yield N-(5'-phosphoribosyl)-anthranilate (PRA). This Paramagnetospirillum magneticum (strain ATCC 700264 / AMB-1) (Magnetospirillum magneticum) protein is Anthranilate phosphoribosyltransferase.